The sequence spans 145 residues: Neuromedin-S (145 aa).

Positions 1-27 (MRSEKHLLPLPLLLAICCLGTLHLSSG) are cleaved as a signal peptide. Propeptides lie at residues 28 to 89 (FPQS…HEIY) and 92 to 117 (FLFQ…AEYT). Asparagine 136 bears the Asparagine amide mark. A propeptide spanning residues 140–145 (VSINEH) is cleaved from the precursor.

Belongs to the NmU family. In terms of tissue distribution, expressed by the skin glands.

It is found in the secreted. In terms of biological role, stimulates uterine smooth muscle contraction (EC(50)=1.6 nM). Synthetic peptide NmS-17 induces calcium mobilization in CHO cells transfected with either human FM-3/GPR66 (EC(50)=0.085 nM) or FM-4/TGR-1 (EC(50)=0.231 nM) NmU/NmS receptors. In Bombina maxima (Giant fire-bellied toad), this protein is Neuromedin-S (nms).